The primary structure comprises 113 residues: U11-theraphotoxin-Hhn1r (113 aa).

The first 21 residues, 1–21 (MNTVRVTFLLVFVLAVSLGQA), serve as a signal peptide directing secretion. The propeptide occupies 22–74 (DKDENRMEMQEKTEQGKSYLDFAENLLLQKLEELEAKLLEEDSEESRNSRQKR). The segment at 61–83 (EEDSEESRNSRQKRCIGEGVPCD) is disordered. Intrachain disulfides connect cysteine 75/cysteine 90, cysteine 82/cysteine 95, and cysteine 89/cysteine 110.

The protein belongs to the neurotoxin 14 (magi-1) family. 01 (HNTX-16) subfamily. In terms of tissue distribution, expressed by the venom gland.

The protein resides in the secreted. Its function is as follows. Probable ion channel inhibitor. The sequence is that of U11-theraphotoxin-Hhn1r from Cyriopagopus hainanus (Chinese bird spider).